Here is a 972-residue protein sequence, read N- to C-terminus: Nuclear factor NF-kappa-B p105 subunit (972 aa).

Residues 39-246 (ADGPYLQILE…DAIYDSKAPN (208 aa)) enclose the RHD domain. Residue Cys-61 is modified to S-nitrosocysteine; alternate. Residue Cys-61 is the site of S-(15-deoxy-Delta12,14-prostaglandin J2-9-yl)cysteine; alternate attachment. Lys-325 participates in a covalent cross-link: Glycyl lysine isopeptide (Lys-Gly) (interchain with G-Cter in SUMO2). Residue Ser-337 is modified to Phosphoserine; by PKA. Residues 360 to 365 (QRKRQK) carry the Nuclear localization signal motif. Residues 372–394 (DSFGGGSGAGAGGGGMFGSGGGG) are GRR. The disordered stretch occupies residues 425–473 (KSNAGMKHGTIDTPSKNDSEGCGKNVDREAVNLSGKVTEPTEQDKESSM). N6-acetyllysine; by EP300 occurs at positions 431 and 440. Residues 435-972 (IDTPSKNDSE…GQEGPIEGKI (538 aa)) form an interaction with CFLAR region. Over residues 439-454 (SKNDSEGCGKNVDREA) the composition is skewed to basic and acidic residues. ANK repeat units follow at residues 539 to 568 (NGDSVLHLAIIHLHAQLVRDLLEVTSGLIS), 578 to 607 (LYQTPLHLAVITKQEAVVDDLLRAGADLSL), 611 to 640 (LGNSVLHLAAKEGQDKILSILLKHKKAALL), 647 to 676 (EGLNAIHIAVMSNSMPCLLLLVAAGADVNA), 681 to 711 (SGRTALHLAVEHDNISLAGCLLLEGDAHVDS), and 715 to 744 (DGTTPLHIAAGRGSTRLAALLKAAGADPLV). The segment at 647–681 (EGLNAIHIAVMSNSMPCLLLLVAAGADVNAQERKS) is essential for interaction with HIF1AN. Asn-675 carries the (3S)-3-hydroxyasparagine; by HIF1AN modification. Phosphoserine is present on Ser-756. The stretch at 768–798 (PGTTPLDMATNWQVFDILNGKPYEPEFTSDD) is one ANK 7 repeat. Positions 814-889 (LQLYKLLEIP…EAIEVIQAAF (76 aa)) constitute a Death domain. The segment at 894-926 (TAAPSPGKGAPQTLSLPLSSASTRSPVDEVRDD) is disordered. Over residues 905 to 918 (QTLSLPLSSASTRS) the composition is skewed to polar residues. Phosphoserine; by GSK3-beta; in vitro is present on residues Ser-908 and Ser-912. The residue at position 927 (Ser-927) is a Phosphoserine. Ser-931 and Ser-936 each carry phosphoserine; by IKKB. A Phosphoserine modification is found at Ser-941. Thr-947 carries the phosphothreonine modification.

Component of the NF-kappa-B p65-p50 complex. Homodimer; component of the NF-kappa-B p50-p50 complex. Component of the NF-kappa-B p105-p50 complex. Component of the NF-kappa-B p50-c-Rel complex. Component of a complex consisting of the NF-kappa-B p50-p50 homodimer and BCL3. Also interacts with MAP3K8. NF-kappa-B p50 subunit interacts with NCOA3 coactivator, which may coactivate NF-kappa-B dependent expression via its histone acetyltransferase activity. Interacts with TSC22D3; this interaction prevents nuclear translocation and DNA-binding. Interacts with SPAG9 and UNC5CL. NFKB1/p105 interacts with CFLAR; the interaction inhibits p105 processing into p50. NFKB1/p105 forms a ternary complex with MAP3K8 and TNIP2. Interacts with GSK3B; the interaction prevents processing of p105 to p50. NFKB1/p50 interacts with NFKBIE. NFKB1/p50 interacts with NFKBIZ. Nuclear factor NF-kappa-B p50 subunit interacts with NFKBID. Directly interacts with MEN1. Interacts with HIF1AN. Interacts with FEM1A; interaction is direct. Post-translationally, generation of the NF-kappa-B p50 (Nuclear factor NF-kappa-B p50 subunit) transcription factor takes place both cotranslationally and post-translationally via non-mutually exclusive mechanisms. A cotranslational processing allows the production of both p50 and p105 (Nuclear factor NF-kappa-B p105 subunit) from a single NFKB1 mRNA. While translation occurs, the particular unfolded structure after the GRR repeat region acts as a substrate for the proteasome, promoting degradation of the C-terminus. The GRR acts as a proteasomal 'stop signal', protecting the region upstream of the GRR from degradation and promoting generation of p50. It is unclear if limited proteasome degradation during cotranslational processing depends on ubiquitination. NF-kappa-B p50 is also generated post-translationally following ubiquitination by the KPC complex, leading to limited processing by the proteasome downstream of the GRR region, thereby generating p50. Phosphorylation at the C-terminus by IKBKB/IKKB acts as a signal for ubiquitination and promotes either complete degradation or processing to generate the NF-kappa-B p50 (Nuclear factor NF-kappa-B p50 subunit). Phosphorylation at Ser-908 and Ser-912 primes p105 for proteolytic processing in response to TNF-alpha stimulation. Phosphorylation at Ser-927, Ser-931 and Ser-936 are required for BTRC/BTRCP-mediated ubiquitination and proteolysis. Phosphorylation at Ser-931 is also required for ubiquitination by the KPC complex and limited processing to generate NF-kappa-B p50 (Nuclear factor NF-kappa-B p50 subunit). In terms of processing, polyubiquitinated at multiple Lys residues in the C-terminus. Polyubiquitinated by the SCF(FBXW11) and SCF(BTRC) complexes following phosphorylation at Ser-923, Ser-927, Ser-931 and Ser-936, leading to its complete degradation. In contrast, polyubiquitination by the KPC complex following phosphorylation at Ser-931 leads to limited proteosomal processing and generation of the active NF-kappa-B p50 (Nuclear factor NF-kappa-B p50 subunit). Post-translationally, S-nitrosylation of Cys-61 affects DNA binding. The covalent modification of cysteine by 15-deoxy-Delta12,14-prostaglandin-J2 is autocatalytic and reversible. It may occur as an alternative to other cysteine modifications, such as S-nitrosylation and S-palmitoylation.

It localises to the cytoplasm. Its subcellular location is the nucleus. In terms of biological role, NF-kappa-B is a pleiotropic transcription factor present in almost all cell types and is the endpoint of a series of signal transduction events that are initiated by a vast array of stimuli related to many biological processes such as inflammation, immunity, differentiation, cell growth, tumorigenesis and apoptosis. NF-kappa-B is a homo- or heterodimeric complex formed by the Rel-like domain-containing proteins RELA/p65, RELB, NFKB1/p105, NFKB1/p50, REL and NFKB2/p52 and the heterodimeric p65-p50 complex appears to be most abundant one. The dimers bind at kappa-B sites in the DNA of their target genes and the individual dimers have distinct preferences for different kappa-B sites that they can bind with distinguishable affinity and specificity. Different dimer combinations act as transcriptional activators or repressors, respectively. NF-kappa-B is controlled by various mechanisms of post-translational modification and subcellular compartmentalization as well as by interactions with other cofactors or corepressors. NF-kappa-B complexes are held in the cytoplasm in an inactive state complexed with members of the NF-kappa-B inhibitor (I-kappa-B) family. In a conventional activation pathway, I-kappa-B is phosphorylated by I-kappa-B kinases (IKKs) in response to different activators, subsequently degraded thus liberating the active NF-kappa-B complex which translocates to the nucleus. NF-kappa-B heterodimeric p65-p50 and RelB-p50 complexes are transcriptional activators. The NF-kappa-B p50-p50 homodimer is a transcriptional repressor, but can act as a transcriptional activator when associated with BCL3. NFKB1 appears to have dual functions such as cytoplasmic retention of attached NF-kappa-B proteins by p105 and generation of p50 by a cotranslational processing. The proteasome-mediated process ensures the production of both p50 and p105 and preserves their independent function, although processing of NFKB1/p105 also appears to occur post-translationally. p50 binds to the kappa-B consensus sequence 5'-GGRNNYYCC-3', located in the enhancer region of genes involved in immune response and acute phase reactions. In a complex with MAP3K8, NFKB1/p105 represses MAP3K8-induced MAPK signaling; active MAP3K8 is released by proteasome-dependent degradation of NFKB1/p105. P105 is the precursor of the active p50 subunit (Nuclear factor NF-kappa-B p50 subunit) of the nuclear factor NF-kappa-B. Acts as a cytoplasmic retention of attached NF-kappa-B proteins by p105. Its function is as follows. Constitutes the active form, which associates with RELA/p65 to form the NF-kappa-B p65-p50 complex to form a transcription factor. Together with RELA/p65, binds to the kappa-B consensus sequence 5'-GGRNNYYCC-3', located in the enhancer region of genes involved in immune response and acute phase reactions. This is Nuclear factor NF-kappa-B p105 subunit (NFKB1) from Canis lupus familiaris (Dog).